A 452-amino-acid chain; its full sequence is Friend leukemia integration 1 transcription factor (452 aa).

At Ser-39 the chain carries Phosphoserine. The PNT domain occupies 112-198; the sequence is PPPPNMTTNE…SHLTYLRESS (87 aa). A compositionally biased stretch (polar residues) spans 202–214; sequence YNTTSHTDPSSRL. The segment at 202-272 is disordered; it reads YNTTSHTDPS…YQILGPTSSR (71 aa). The span at 215–226 shows a compositional bias: basic and acidic residues; the sequence is NVKEDPSYDSVR. A compositionally biased stretch (polar residues) spans 248–257; that stretch reads QTMSKNTEQR. The segment at residues 281-361 is a DNA-binding region (ETS); that stretch reads IQLWQFLLEL…HGKRYAYKFD (81 aa).

The protein belongs to the ETS family. As to quaternary structure, can form homodimers or heterodimers with ETV6/TEL1.

It localises to the nucleus. In terms of biological role, sequence-specific transcriptional activator. Recognizes the DNA sequence 5'-C[CA]GGAAGT-3'. This Bos taurus (Bovine) protein is Friend leukemia integration 1 transcription factor (FLI1).